The chain runs to 696 residues: F-box/LRR-repeat protein 5 (696 aa).

The tract at residues 1–159 is hemerythrin-like; that stretch reads MAPFPDEVDV…IKKQVIAQHS (159 aa). Fe(3+) contacts are provided by His-15, His-57, Glu-58, Glu-61, His-80, His-126, and Glu-130. Residues 205-251 form the F-box domain; that stretch reads STHISQLPTEILLCLFRYLGPEDLCHCGQVCSAWSDLAKTGSLWRHL. LRR repeat units lie at residues 343-367, 368-395, 396-421, 582-612, 613-640, and 641-666; these read SSTV…LDLT, QTDV…DLSG, CEKL…TCSE, CSSG…SLSG, CYQV…NLSG, and CLLI…HFYY. [2Fe-2S] cluster-binding residues include Cys-667, Cys-681, Cys-691, and Cys-692.

As to quaternary structure, part of a SCF (SKP1-cullin-F-box) protein ligase complex. [2Fe-2S] cluster is required as a cofactor. Ubiquitinated upon iron and oxygen depletion, leading to its degradation by the proteasome. Ubiquitination is regulated by the hemerythrin-like region that acts as an oxygen and iron sensor.

It is found in the cytoplasm. Its subcellular location is the perinuclear region. The protein resides in the nucleus. The protein operates within protein modification; protein ubiquitination. Component of some SCF (SKP1-cullin-F-box) protein ligase complex that plays a central role in iron homeostasis by promoting the ubiquitination and subsequent degradation of ireb2/irp2. Upon high iron and oxygen level, it specifically recognizes and binds ireb2/irp2, promoting its ubiquitination and degradation by the proteasome. This chain is F-box/LRR-repeat protein 5 (fbxl5), found in Salmo salar (Atlantic salmon).